The chain runs to 352 residues: MGSNFHYTIDLNEDQNHQPFFASLGSSLHHHLQQQQQQQQHFHHQASSNPSSLMSPSLSYFPFLINSRQDQVYVGYNNNTFHDVLDTHISQPLETKNFVSDGGSSSSDQMVPKKETRLKLTIKKKDNHQDQTDLPQSPIKDMTGTNSLKWISSKVRLMKKKKAIITTSDSSKQHTNNDQSSNLSNSERQNGYNNDCVIRICSDCNTTKTPLWRSGPRGPKSLCNACGIRQRKARRAAMATATATAVSGVSPPVMKKKMQNKNKISNGVYKILSPLPLKVNTCKRMITLEETALAEDLETQSNSTMLSSSDNIYFDDLALLLSKSSAYQQVFPQDEKEAAILLMALSHGMVHG.

Residues 27–53 are disordered; it reads SLHHHLQQQQQQQQHFHHQASSNPSSL. The segment covering 33-53 has biased composition (low complexity); it reads QQQQQQQQHFHHQASSNPSSL. Positions 112 to 119 match the Nuclear localization signal motif; sequence PKKETRLK. The interval 163–189 is disordered; sequence AIITTSDSSKQHTNNDQSSNLSNSERQ. Residues 165 to 189 are compositionally biased toward polar residues; it reads ITTSDSSKQHTNNDQSSNLSNSERQ. The GATA-type zinc-finger motif lies at 195–249; it reads DCVIRICSDCNTTKTPLWRSGPRGPKSLCNACGIRQRKARRAAMATATATAVSGV.

It belongs to the type IV zinc-finger family. Class B subfamily. As to quaternary structure, forms heterodimers with GATA18. Expressed predominantly in leaves, and barely in stems, flowers and siliques.

The protein localises to the nucleus. Functionally, transcriptional regulator that specifically binds 5'-GATA-3' or 5'-GAT-3' motifs within gene promoters. Involved in the modulation of chloroplast development, growth and division in a cytokinin-dependent manner. Repressor of the gibberellic acid (GA) signaling pathway that regulates flowering and modulates greening, in a SOC1-dependent manner. Prevents the accumulation of SOC1 during flowering. Promotes chlorophyll biosynthesis throughout the plant, by regulating chlorophyll biosynthetic genes (e.g. HEMA1 and GUN4) and chloroplast localized glutamate synthase (e.g. GLU1). Involved in the regulation of sugar-sensing genes (e.g. HXK1, HXK2, STP13 and PLT6). Regulator of germination, senescence, elongation growth and flowering time. Influences also leaf starch content. The chain is Putative GATA transcription factor 22 from Arabidopsis thaliana (Mouse-ear cress).